We begin with the raw amino-acid sequence, 314 residues long: Dihydroorotate dehydrogenase (fumarate) (314 aa).

Substrate contacts are provided by residues K46, N70–L74, and N130. Residue K46 to S47 participates in FMN binding. N130 serves as a coordination point for FMN. Active-site nucleophile residues include S132 and C133. Residues K167 and I195 each contribute to the FMN site. Residue N196–S197 coordinates substrate. Residues G224, G252–G253, and G274–T275 each bind FMN.

The protein belongs to the dihydroorotate dehydrogenase family. Type 1 subfamily. In terms of assembly, homodimer. FMN is required as a cofactor.

The protein resides in the cytoplasm. The enzyme catalyses (S)-dihydroorotate + fumarate = orotate + succinate. It functions in the pathway pyrimidine metabolism; UMP biosynthesis via de novo pathway. Functionally, catalyzes the conversion of dihydroorotate to orotate with fumarate as the electron acceptor. This Saccharomyces bayanus (Yeast) protein is Dihydroorotate dehydrogenase (fumarate) (URA1).